Here is a 174-residue protein sequence, read N- to C-terminus: Gamma-crystallin C (174 aa).

Beta/gamma crystallin 'Greek key' domains lie at 2–40 (GKITFYEDRAFQGRSYETTTDCPNLQPYFSRCNSIRVES) and 41–83 (GCWM…CLIP). C23 carries the S-methylcysteine modification. Residues 84-87 (QTVS) are connecting peptide. 2 consecutive Beta/gamma crystallin 'Greek key' domains span residues 88–128 (HRLR…HVLE) and 129–171 (GCWV…RRVV).

It belongs to the beta/gamma-crystallin family. Monomer.

In terms of biological role, crystallins are the dominant structural components of the vertebrate eye lens. This is Gamma-crystallin C (CRYGC) from Homo sapiens (Human).